Reading from the N-terminus, the 303-residue chain is Ferrochelatase (303 aa).

Fe cation is bound by residues histidine 185 and glutamate 262.

It belongs to the ferrochelatase family.

The protein localises to the cytoplasm. It carries out the reaction heme b + 2 H(+) = protoporphyrin IX + Fe(2+). The protein operates within porphyrin-containing compound metabolism; protoheme biosynthesis; protoheme from protoporphyrin-IX: step 1/1. Its function is as follows. Catalyzes the ferrous insertion into protoporphyrin IX. The sequence is that of Ferrochelatase from Campylobacter jejuni subsp. doylei (strain ATCC BAA-1458 / RM4099 / 269.97).